Here is a 130-residue protein sequence, read N- to C-terminus: Small ribosomal subunit protein uS9 (130 aa).

The interval 98 to 130 is disordered; it reads LKKAGMLTRDPRMKERKKYGLKKARKASQFSKR. A compositionally biased stretch (basic residues) spans 111–130; sequence KERKKYGLKKARKASQFSKR.

This sequence belongs to the universal ribosomal protein uS9 family.

This Lacticaseibacillus casei (strain BL23) (Lactobacillus casei) protein is Small ribosomal subunit protein uS9.